We begin with the raw amino-acid sequence, 172 residues long: Cytochrome c oxidase subunit 4 isoform 2, mitochondrial (172 aa).

Residues 1-18 (MFSRATRSLVMKTGGLRT) constitute a mitochondrion transit peptide. The interval 1–33 (MFSRATRSLVMKTGGLRTQGTHSPGSAASSSQR) is disordered. Polar residues predominate over residues 16–33 (LRTQGTHSPGSAASSSQR). Residues 19-101 (QGTHSPGSAA…TFAEMNHRSN (83 aa)) are Mitochondrial matrix-facing. The helical transmembrane segment at 102–127 (EWKTVMGCVFFFIGFTALVIWWQRVY) threads the bilayer. Topologically, residues 128 to 172 (VFPKKVVTLTEERKAQQLQRLLDMKSNPIQGLSAHWDYEKKEWKK) are mitochondrial intermembrane.

It belongs to the cytochrome c oxidase IV family. Component of the cytochrome c oxidase (complex IV, CIV), a multisubunit enzyme composed of 14 subunits. The complex is composed of a catalytic core of 3 subunits MT-CO1, MT-CO2 and MT-CO3, encoded in the mitochondrial DNA, and 11 supernumerary subunits COX4I, COX5A, COX5B, COX6A, COX6B, COX6C, COX7A, COX7B, COX7C, COX8 and NDUFA4, which are encoded in the nuclear genome. The complex exists as a monomer or a dimer and forms supercomplexes (SCs) in the inner mitochondrial membrane with NADH-ubiquinone oxidoreductase (complex I, CI) and ubiquinol-cytochrome c oxidoreductase (cytochrome b-c1 complex, complex III, CIII), resulting in different assemblies (supercomplex SCI(1)III(2)IV(1) and megacomplex MCI(2)III(2)IV(2)). Highly expressed in lung.

The protein localises to the mitochondrion inner membrane. The protein operates within energy metabolism; oxidative phosphorylation. Component of the cytochrome c oxidase, the last enzyme in the mitochondrial electron transport chain which drives oxidative phosphorylation. The respiratory chain contains 3 multisubunit complexes succinate dehydrogenase (complex II, CII), ubiquinol-cytochrome c oxidoreductase (cytochrome b-c1 complex, complex III, CIII) and cytochrome c oxidase (complex IV, CIV), that cooperate to transfer electrons derived from NADH and succinate to molecular oxygen, creating an electrochemical gradient over the inner membrane that drives transmembrane transport and the ATP synthase. Cytochrome c oxidase is the component of the respiratory chain that catalyzes the reduction of oxygen to water. Electrons originating from reduced cytochrome c in the intermembrane space (IMS) are transferred via the dinuclear copper A center (CU(A)) of subunit 2 and heme A of subunit 1 to the active site in subunit 1, a binuclear center (BNC) formed by heme A3 and copper B (CU(B)). The BNC reduces molecular oxygen to 2 water molecules using 4 electrons from cytochrome c in the IMS and 4 protons from the mitochondrial matrix. The chain is Cytochrome c oxidase subunit 4 isoform 2, mitochondrial (Cox4i2) from Rattus norvegicus (Rat).